We begin with the raw amino-acid sequence, 550 residues long: Keratin, type II cytoskeletal 74 (550 aa).

The head stretch occupies residues 1 to 140; the sequence is MSRQLNIKSG…DPEIQKVRAQ (140 aa). The segment at 141–176 is coil 1A; it reads EREQIMALNNKFASFIDKVRFLEQQNQVLGTKWELL. The 328-residue stretch at 141–468 folds into the IF rod domain; that stretch reads EREQIMALNN…KLLEGEECWM (328 aa). The segment at 177–195 is linker 1; the sequence is QQMDLNNCRKNLEPILEGY. The interval 196–287 is coil 1B; that stretch reads IGNLRKQLEM…CLYDAEVAQI (92 aa). The interval 288–311 is linker 12; the sequence is QTHTSETSVILSMDNNRYLDLDSI. The tract at residues 312-464 is coil 2; the sequence is IAEVRAQYED…ATYSKLLEGE (153 aa). Positions 465–550 are tail; the sequence is ECWMSGENPS…VSSRARKAAR (86 aa). The segment at 491-550 is disordered; the sequence is HPGSSASTDLGASTMASTGTSSSSSTQSGQTRAKGARVGDPKDSQDKSTPVSSRARKAAR. Over residues 502–521 the composition is skewed to low complexity; that stretch reads ASTMASTGTSSSSSTQSGQT. Residues 527 to 536 are compositionally biased toward basic and acidic residues; it reads RVGDPKDSQD.

The protein belongs to the intermediate filament family. As to quaternary structure, heterotetramer of two type I and two type II keratins.

In terms of biological role, has a role in hair formation. Specific component of keratin intermediate filaments in the inner root sheath (IRS) of the hair follicle. The protein is Keratin, type II cytoskeletal 74 (KRT74) of Bos taurus (Bovine).